The chain runs to 229 residues: Uracil-DNA glycosylase (229 aa).

Aspartate 72 (proton acceptor) is an active-site residue.

The protein belongs to the uracil-DNA glycosylase (UDG) superfamily. UNG family.

It localises to the cytoplasm. The enzyme catalyses Hydrolyzes single-stranded DNA or mismatched double-stranded DNA and polynucleotides, releasing free uracil.. Excises uracil residues from the DNA which can arise as a result of misincorporation of dUMP residues by DNA polymerase or due to deamination of cytosine. The sequence is that of Uracil-DNA glycosylase from Dichelobacter nodosus (strain VCS1703A).